A 156-amino-acid polypeptide reads, in one-letter code: Small ribosomal subunit protein uS7 (156 aa).

It belongs to the universal ribosomal protein uS7 family. In terms of assembly, part of the 30S ribosomal subunit. Contacts proteins S9 and S11.

In terms of biological role, one of the primary rRNA binding proteins, it binds directly to 16S rRNA where it nucleates assembly of the head domain of the 30S subunit. Is located at the subunit interface close to the decoding center, probably blocks exit of the E-site tRNA. The sequence is that of Small ribosomal subunit protein uS7 from Gloeobacter violaceus (strain ATCC 29082 / PCC 7421).